We begin with the raw amino-acid sequence, 227 residues long: Lysosomal-associated transmembrane protein 4B (227 aa).

The next 4 membrane-spanning stretches (helical) occupy residues isoleucine 26–alanine 46, methionine 72–glycine 92, tryptophan 100–isoleucine 120, and cysteine 153–isoleucine 173. The interval proline 205–proline 222 is required for NEDD4 interaction.

This sequence belongs to the LAPTM4/LAPTM5 transporter family. Homooligomer; upon reaching the lysosomes. Interacts with MCOLN1. Interacts with NEDD4; may play a role in the lysosomal sorting of LAPTM4B; enhances HGS association with NEDD4; mediates inhibition of EGFR degradation. Interacts with PIP5K1C; promotes SNX5 association with LAPTM4B; kinase activity of PIP5K1C is required; interaction is regulated by phosphatidylinositol 4,5-bisphosphate generated by PIP5K1C. Interacts with HGS; promotes HGS ubiquitination. Interacts with SNX5. Interacts with SLC3A2 and SLC7A5; recruits SLC3A2 and SLC7A5 to lysosomes to promote leucine uptake into these organelles and is required for mTORC1 activation. Interacts with LRRC32; decreases TGFB1 production in regulatory T cells. Interacts with BECN1; competes with EGFR for LAPTM4B binding; regulates EGFR activity. Interacts with EGFR; positively correlates with EGFR activation. Post-translationally, undergoes proteolytic cleavage following delivery to the lysosomes. In terms of processing, ubiquitinated by NEDD4.

The protein resides in the endomembrane system. It is found in the late endosome membrane. The protein localises to the cell membrane. It localises to the cell projection. Its subcellular location is the lysosome membrane. The protein resides in the endosome membrane. It is found in the endosome. The protein localises to the multivesicular body membrane. It localises to the multivesicular body lumen. Required for optimal lysosomal function. Blocks EGF-stimulated EGFR intraluminal sorting and degradation. Conversely by binding with the phosphatidylinositol 4,5-bisphosphate, regulates its PIP5K1C interaction, inhibits HGS ubiquitination and relieves LAPTM4B inhibition of EGFR degradation. Recruits SLC3A2 and SLC7A5 (the Leu transporter) to the lysosome, promoting entry of leucine and other essential amino acid (EAA) into the lysosome, stimulating activation of proton-transporting vacuolar (V)-ATPase protein pump (V-ATPase) and hence mTORC1 activation. Plays a role as negative regulator of TGFB1 production in regulatory T cells. Binds ceramide and facilitates its exit from late endosome in order to control cell death pathways. This chain is Lysosomal-associated transmembrane protein 4B, found in Rattus norvegicus (Rat).